Consider the following 303-residue polypeptide: Elongation factor Ts (303 aa).

The tract at residues 80–83 is involved in Mg(2+) ion dislocation from EF-Tu; that stretch reads TDFV.

The protein belongs to the EF-Ts family.

The protein resides in the cytoplasm. Functionally, associates with the EF-Tu.GDP complex and induces the exchange of GDP to GTP. It remains bound to the aminoacyl-tRNA.EF-Tu.GTP complex up to the GTP hydrolysis stage on the ribosome. The chain is Elongation factor Ts from Clostridium perfringens (strain ATCC 13124 / DSM 756 / JCM 1290 / NCIMB 6125 / NCTC 8237 / Type A).